Reading from the N-terminus, the 224-residue chain is MDVMKGTTTVGLICDDAVILATDKRASLGNLVADKEAKKLYKIDDYIAMTIAGSVGDAQAIVRLLTAEAKLYKMRTGRNIPPLACATLLSNILHSSRVFPFLTQIIIGGYDLLEGAKLFSLDPLGGMNEEKTFTATGSGSPIAYGVLEAGYDREMSVEEGIKLAINALKSAMERDTFSGNGISLAVITKEGVKIFEDEEIEKILDGMKAKSKKKTTKRGRRKSK.

The propeptide at 1–6 (MDVMKG) is removed in mature form; by autocatalysis. The active-site Nucleophile is threonine 7.

It belongs to the peptidase T1B family. In terms of assembly, the 20S proteasome core is composed of 14 alpha and 14 beta subunits that assemble into four stacked heptameric rings, resulting in a barrel-shaped structure. The two inner rings, each composed of seven catalytic beta subunits, are sandwiched by two outer rings, each composed of seven alpha subunits. The catalytic chamber with the active sites is on the inside of the barrel. Has a gated structure, the ends of the cylinder being occluded by the N-termini of the alpha-subunits. Is capped at one or both ends by the proteasome regulatory ATPase, PAN.

The protein resides in the cytoplasm. It carries out the reaction Cleavage of peptide bonds with very broad specificity.. The formation of the proteasomal ATPase PAN-20S proteasome complex, via the docking of the C-termini of PAN into the intersubunit pockets in the alpha-rings, triggers opening of the gate for substrate entry. Interconversion between the open-gate and close-gate conformations leads to a dynamic regulation of the 20S proteasome proteolysis activity. In terms of biological role, component of the proteasome core, a large protease complex with broad specificity involved in protein degradation. In Methanocaldococcus sp. (strain FS406-22), this protein is Proteasome subunit beta.